The chain runs to 83 residues: Large ribosomal subunit protein uL24 (83 aa).

This sequence belongs to the universal ribosomal protein uL24 family. Part of the 50S ribosomal subunit.

In terms of biological role, one of two assembly initiator proteins, it binds directly to the 5'-end of the 23S rRNA, where it nucleates assembly of the 50S subunit. One of the proteins that surrounds the polypeptide exit tunnel on the outside of the subunit. The protein is Large ribosomal subunit protein uL24 of Symbiobacterium thermophilum (strain DSM 24528 / JCM 14929 / IAM 14863 / T).